The sequence spans 1359 residues: DNA-directed RNA polymerase subunit beta (1359 aa).

This sequence belongs to the RNA polymerase beta chain family. The RNAP catalytic core consists of 2 alpha, 1 beta, 1 beta' and 1 omega subunit. When a sigma factor is associated with the core the holoenzyme is formed, which can initiate transcription.

The catalysed reaction is RNA(n) + a ribonucleoside 5'-triphosphate = RNA(n+1) + diphosphate. Functionally, DNA-dependent RNA polymerase catalyzes the transcription of DNA into RNA using the four ribonucleoside triphosphates as substrates. This is DNA-directed RNA polymerase subunit beta from Nitrosomonas eutropha (strain DSM 101675 / C91 / Nm57).